A 179-amino-acid chain; its full sequence is Protein GrpE (179 aa).

The interval 1 to 20 is disordered; it reads MSEETKEEIKNEKVDEEVTE.

It belongs to the GrpE family. In terms of assembly, homodimer.

It is found in the cytoplasm. Functionally, participates actively in the response to hyperosmotic and heat shock by preventing the aggregation of stress-denatured proteins, in association with DnaK and GrpE. It is the nucleotide exchange factor for DnaK and may function as a thermosensor. Unfolded proteins bind initially to DnaJ; upon interaction with the DnaJ-bound protein, DnaK hydrolyzes its bound ATP, resulting in the formation of a stable complex. GrpE releases ADP from DnaK; ATP binding to DnaK triggers the release of the substrate protein, thus completing the reaction cycle. Several rounds of ATP-dependent interactions between DnaJ, DnaK and GrpE are required for fully efficient folding. The polypeptide is Protein GrpE (Lactococcus lactis subsp. lactis (strain IL1403) (Streptococcus lactis)).